Here is a 217-residue protein sequence, read N- to C-terminus: Ras-related protein Rab11B (217 aa).

A GTP-binding site is contributed by 21-28 (GDSGVGKS). The Effector region signature appears at 43–51 (SKSTIGVEF). GTP is bound by residues 69–73 (DTAGQ) and 127–130 (NKAD). 2 S-geranylgeranyl cysteine lipidation sites follow: Cys214 and Cys215.

The protein belongs to the small GTPase superfamily. Rab family.

The protein localises to the cell membrane. The protein is Ras-related protein Rab11B (RAB11B) of Nicotiana tabacum (Common tobacco).